A 699-amino-acid polypeptide reads, in one-letter code: D-(-)-3-hydroxybutyrate oligomer hydrolase (699 aa).

The signal sequence occupies residues 1–19 (MNPSLCIAVAFACPLSALA). S303 serves as the catalytic Charge relay system.

Belongs to the D-(-)-3-hydroxybutyrate oligomer hydrolase family.

It is found in the secreted. It carries out the reaction (3R)-hydroxybutanoate dimer + H2O = 2 (R)-3-hydroxybutanoate + H(+). It functions in the pathway lipid metabolism; butanoate metabolism. Functionally, participates in the degradation of poly-3-hydroxybutyrate (PHB). It works downstream of poly(3-hydroxybutyrate) depolymerase, hydrolyzing D(-)-3-hydroxybutyrate oligomers of various length (3HB-oligomers) into 3HB-monomers. The protein is D-(-)-3-hydroxybutyrate oligomer hydrolase of Azoarcus sp. (strain BH72).